The sequence spans 116 residues: Cyclin-dependent protein kinase inhibitor SMR9 (116 aa).

Residues 1 to 22 (MASKGKKPLRRTTTRRRKRSHF) are compositionally biased toward basic residues. The disordered stretch occupies residues 1 to 62 (MASKGKKPLR…PVSAESGCCT (62 aa)). Over residues 35 to 56 (VTSTSSTSTSPTSTATPSPVSA) the composition is skewed to low complexity.

Probable cyclin-dependent protein kinase (CDK) inhibitor that functions as a repressor of mitosis in the endoreduplication cell cycle. The chain is Cyclin-dependent protein kinase inhibitor SMR9 from Arabidopsis thaliana (Mouse-ear cress).